The following is a 138-amino-acid chain: Transcription antitermination protein NusB (138 aa).

Belongs to the NusB family.

In terms of biological role, involved in transcription antitermination. Required for transcription of ribosomal RNA (rRNA) genes. Binds specifically to the boxA antiterminator sequence of the ribosomal RNA (rrn) operons. The protein is Transcription antitermination protein NusB of Leptospira borgpetersenii serovar Hardjo-bovis (strain JB197).